A 257-amino-acid chain; its full sequence is Flap endonuclease Xni (257 aa).

Aspartate 109 lines the Mg(2+) pocket. The 90-residue stretch at 165 to 254 folds into the 5'-3' exonuclease domain; sequence VKPEQLADYW…GFNLQDIRYE (90 aa). Leucine 176, proline 185, isoleucine 187, and isoleucine 190 together coordinate K(+). The segment at 189–194 is interaction with DNA; the sequence is GIGPKA.

This sequence belongs to the Xni family. Mg(2+) is required as a cofactor. It depends on K(+) as a cofactor.

Has flap endonuclease activity. During DNA replication, flap endonucleases cleave the 5'-overhanging flap structure that is generated by displacement synthesis when DNA polymerase encounters the 5'-end of a downstream Okazaki fragment. The protein is Flap endonuclease Xni of Vibrio atlanticus (strain LGP32) (Vibrio splendidus (strain Mel32)).